We begin with the raw amino-acid sequence, 448 residues long: Ribulose bisphosphate carboxylase large chain (448 aa).

At lysine 4 the chain carries N6,N6,N6-trimethyllysine. Substrate contacts are provided by asparagine 113 and threonine 163. Catalysis depends on lysine 165, which acts as the Proton acceptor. Lysine 167 is a binding site for substrate. The Mg(2+) site is built by lysine 191, aspartate 193, and glutamate 194. Lysine 191 bears the N6-carboxylysine mark. Histidine 284 acts as the Proton acceptor in catalysis. Positions 285, 317, and 369 each coordinate substrate.

It belongs to the RuBisCO large chain family. Type I subfamily. Heterohexadecamer of 8 large chains and 8 small chains; disulfide-linked. The disulfide link is formed within the large subunit homodimers. The cofactor is Mg(2+). In terms of processing, the disulfide bond which can form in the large chain dimeric partners within the hexadecamer appears to be associated with oxidative stress and protein turnover.

It localises to the plastid. The protein resides in the chloroplast. It carries out the reaction 2 (2R)-3-phosphoglycerate + 2 H(+) = D-ribulose 1,5-bisphosphate + CO2 + H2O. It catalyses the reaction D-ribulose 1,5-bisphosphate + O2 = 2-phosphoglycolate + (2R)-3-phosphoglycerate + 2 H(+). In terms of biological role, ruBisCO catalyzes two reactions: the carboxylation of D-ribulose 1,5-bisphosphate, the primary event in carbon dioxide fixation, as well as the oxidative fragmentation of the pentose substrate in the photorespiration process. Both reactions occur simultaneously and in competition at the same active site. This is Ribulose bisphosphate carboxylase large chain from Eucryphia lucida (Leatherwood).